The primary structure comprises 336 residues: Phosphonate dehydrogenase (336 aa).

NAD(+) contacts are provided by residues 155 to 156 (AI), Glu-175, 235 to 237 (PCR), and Asp-261. The active site involves Arg-237. The active site involves Glu-266. The Proton donor role is filled by His-292. 292 to 295 (HIGS) serves as a coordination point for NAD(+).

Homodimer.

The catalysed reaction is phosphonate + NAD(+) + H2O = phosphate + NADH + H(+). Its activity is regulated as follows. Inhibited by NaCl, NADH and sulfite. In terms of biological role, catalyzes phosphite (phosphonate) oxidation. In Stutzerimonas stutzeri (Pseudomonas stutzeri), this protein is Phosphonate dehydrogenase (ptxD).